We begin with the raw amino-acid sequence, 71 residues long: Small ribosomal subunit protein bS21 (71 aa).

The protein belongs to the bacterial ribosomal protein bS21 family.

This chain is Small ribosomal subunit protein bS21, found in Alcanivorax borkumensis (strain ATCC 700651 / DSM 11573 / NCIMB 13689 / SK2).